A 396-amino-acid chain; its full sequence is MAESLLIKDIAIVTENEVIKNGYVGINDGKISTVSTERPKEPYSKEIQAPADSVLLPGMIDIHIHGGYGADTMDASFSTLDIMSSRLPEEGTTSFLATTITQEHGNISQALVNAREWKAAEESSLLGAELLGIHLEGPFVSPKRAGAQPKEWIRPSDVELFKKWQQEAGGLIKIVTLAPEEDQHFELIRHLKDESIIASMGHTDADSALLSDAAKAGASHMTHLYNAMSPFHHREPGVIGTALAHDGFVTELIADGIHSHPLAAKLAFLAKGSSKLILITDSMRAKGLKDGVYEFGGQSVTVRGRTALLSDGTLAGSILKMNEGARHMREFTNCSWTDIANITSENAAKQLGIFDRKGSVTVGKDADLVIVSSDCEVILTICRGNIAFISKEADQI.

Positions 63, 65, and 136 each coordinate Fe cation. 147 to 148 contacts substrate; that stretch reads AQ. Fe cation-binding residues include H202 and H223. Substrate is bound by residues 226–227, R234, and 255–258; these read NA and DGIH. D281 provides a ligand contact to Fe cation. D281 acts as the Proton donor in catalysis. 314-316 is a binding site for substrate; that stretch reads LAG.

This sequence belongs to the metallo-dependent hydrolases superfamily. NagA family. As to quaternary structure, homodimer. A divalent metal cation serves as cofactor.

It carries out the reaction N-acetyl-D-glucosamine 6-phosphate + H2O = D-glucosamine 6-phosphate + acetate. It functions in the pathway amino-sugar metabolism; N-acetylneuraminate degradation; D-fructose 6-phosphate from N-acetylneuraminate: step 4/5. Involved in the first committed step in the biosynthesis of amino-sugar-nucleotides. Catalyzes the hydrolysis of the N-acetyl group of N-acetylglucosamine-6-phosphate (GlcNAc-6-P) to yield glucosamine 6-phosphate and acetate. Essential for growth on N-acetylglucosamine. The chain is N-acetylglucosamine-6-phosphate deacetylase (nagA) from Bacillus subtilis (strain 168).